The following is a 199-amino-acid chain: Recombination protein RecR (199 aa).

The segment at 58-73 adopts a C4-type zinc-finger fold; the sequence is CKKCFNLTSEEECEIC. Residues 81–175 enclose the Toprim domain; sequence KIICVVAETK…KVTRIAYGLP (95 aa).

The protein belongs to the RecR family.

May play a role in DNA repair. It seems to be involved in an RecBC-independent recombinational process of DNA repair. It may act with RecF and RecO. The sequence is that of Recombination protein RecR from Prochlorococcus marinus subsp. pastoris (strain CCMP1986 / NIES-2087 / MED4).